The chain runs to 312 residues: Small ribosomal subunit protein uS2 (312 aa).

This sequence belongs to the universal ribosomal protein uS2 family.

The protein is Small ribosomal subunit protein uS2 of Ruthia magnifica subsp. Calyptogena magnifica.